A 2026-amino-acid chain; its full sequence is Fatty acid synthase subunit beta (2026 aa).

Residues 148-526 (ILMAFGGQGS…VDGRGVRIIA (379 aa)) are acetyltransferase (AT) domain. Residue S268 is the For acetyltransferase activity of the active site. The enoyl reductase (ER) domain stretch occupies residues 579 to 824 (SQLLQAPPII…LILAAAGVAD (246 aa)). The tract at residues 1130 to 1604 (SQVTGSVRSA…LPGDQLTVRI (475 aa)) is dehydratase (DH) domain. One can recognise a MaoC-like domain in the interval 1512-1625 (PGLIDNGSRT…LSVAAYREGT (114 aa)). Positions 1643–2016 (YLFTGQGSQA…LEEAAAVTGS (374 aa)) are malonyl/palmitoyl transferase (MT/PT) domain. The active-site For malonyltransferase activity is S1788.

The protein belongs to the fungal fatty acid synthetase subunit beta family. In terms of assembly, [Alpha(6)beta(6)] hexamers of two multifunctional subunits (alpha and beta).

The catalysed reaction is acetyl-CoA + n malonyl-CoA + 2n NADPH + 4n H(+) = a long-chain-acyl-CoA + n CoA + n CO2 + 2n NADP(+).. The enzyme catalyses holo-[ACP] + acetyl-CoA = acetyl-[ACP] + CoA. It catalyses the reaction holo-[ACP] + malonyl-CoA = malonyl-[ACP] + CoA. It carries out the reaction a (3R)-hydroxyacyl-[ACP] = a (2E)-enoyl-[ACP] + H2O. The catalysed reaction is a 2,3-saturated acyl-[ACP] + NAD(+) = a (2E)-enoyl-[ACP] + NADH + H(+). The enzyme catalyses (9Z)-octadecenoyl-[ACP] + H2O = (9Z)-octadecenoate + holo-[ACP] + H(+). The protein operates within secondary metabolite biosynthesis. Functionally, fatty acid synthase beta subunit; part of the gene cluster that mediates the biosynthesis of oryzines, natural products with an unusual maleidride backbone. The two subunits of the fungal fatty acid synthase oryfasA and oryfasB probably form octenoic acid. This fatty acid is most likely activated by the acyl-CoA ligase oryP to give octenyl-CoA before the citrate synthase-like protein oryE catalyzes condensation with oxaloacetate to form tricarboxylic acid. The next steps of the pathways are conjectural, but a favorite possible route has been proposed, beginning with decarboxylation and concomitant dehydration by the decarboxylase oryM, followed by tautomerization, which may lead to the production of a diene intermediate. Reduction of this diene intermediate could give the known metabolite piliformic acid. On the pathway to oryzine B and oryzine A, however, hydroxylation of the diene by the alpha-ketoglutarate-dependent dioxygenase oryG and lactonisation by the lactonohydrolases oryH or oryL could give oryzine B directly. Finally, enoyl reduction by the dehydrogenase oryD would then convert oryzine B into oryzine A. The polypeptide is Fatty acid synthase subunit beta (Aspergillus oryzae (strain ATCC 42149 / RIB 40) (Yellow koji mold)).